The primary structure comprises 173 residues: Inorganic pyrophosphatase (173 aa).

Positions 29, 43, and 55 each coordinate substrate. 3 residues coordinate Mg(2+): Asp-65, Asp-70, and Asp-102. Residue Tyr-141 participates in substrate binding.

This sequence belongs to the PPase family. Homohexamer. The cofactor is Mg(2+).

It localises to the cytoplasm. It carries out the reaction diphosphate + H2O = 2 phosphate + H(+). In terms of biological role, catalyzes the hydrolysis of inorganic pyrophosphate (PPi) forming two phosphate ions. This Gluconobacter oxydans (strain 621H) (Gluconobacter suboxydans) protein is Inorganic pyrophosphatase.